We begin with the raw amino-acid sequence, 157 residues long: Ribosome maturation factor RimP (157 aa).

Belongs to the RimP family.

The protein resides in the cytoplasm. In terms of biological role, required for maturation of 30S ribosomal subunits. The sequence is that of Ribosome maturation factor RimP from Geobacillus sp. (strain WCH70).